The sequence spans 149 residues: Lipoprotein signal peptidase (149 aa).

Transmembrane regions (helical) follow at residues 58-78 (WFFI…LIRL) and 85-105 (ASLA…DRAM). Residues aspartate 111 and aspartate 127 contribute to the active site. Residues 122–142 (IFNVADMAITIGVGILLLDVF) form a helical membrane-spanning segment.

Belongs to the peptidase A8 family.

The protein localises to the cell membrane. It carries out the reaction Release of signal peptides from bacterial membrane prolipoproteins. Hydrolyzes -Xaa-Yaa-Zaa-|-(S,diacylglyceryl)Cys-, in which Xaa is hydrophobic (preferably Leu), and Yaa (Ala or Ser) and Zaa (Gly or Ala) have small, neutral side chains.. The protein operates within protein modification; lipoprotein biosynthesis (signal peptide cleavage). Its function is as follows. This protein specifically catalyzes the removal of signal peptides from prolipoproteins. The chain is Lipoprotein signal peptidase from Brevibacillus brevis (strain 47 / JCM 6285 / NBRC 100599).